A 104-amino-acid polypeptide reads, in one-letter code: Small ribosomal subunit protein bS6 (104 aa).

This sequence belongs to the bacterial ribosomal protein bS6 family.

In terms of biological role, binds together with bS18 to 16S ribosomal RNA. The protein is Small ribosomal subunit protein bS6 of Elusimicrobium minutum (strain Pei191).